A 267-amino-acid polypeptide reads, in one-letter code: Hemin import ATP-binding protein HmuV (267 aa).

In terms of domain architecture, ABC transporter spans 3-243; it reads LEVRGIEVWR…ELVARVFGLR (241 aa). 35-42 contributes to the ATP binding site; that stretch reads GPNGAGKS.

Belongs to the ABC transporter superfamily. Heme (hemin) importer (TC 3.A.1.14.5) family. As to quaternary structure, the complex is composed of two ATP-binding proteins (HmuV), two transmembrane proteins (HmuU) and a solute-binding protein (HmuT).

The protein localises to the cell inner membrane. Its function is as follows. Part of the ABC transporter complex HmuTUV involved in hemin import. Responsible for energy coupling to the transport system. The sequence is that of Hemin import ATP-binding protein HmuV from Myxococcus xanthus (strain DK1622).